Consider the following 88-residue polypeptide: Auxin-responsive protein SAUR21 (88 aa).

It belongs to the ARG7 family.

The protein localises to the cell membrane. In terms of biological role, functions as a positive effector of cell expansion through modulation of auxin transport. This chain is Auxin-responsive protein SAUR21, found in Arabidopsis thaliana (Mouse-ear cress).